We begin with the raw amino-acid sequence, 637 residues long: Chaperone protein HtpG (637 aa).

Positions 1–345 are a; substrate-binding; it reads MSQQETHGFQ…SNDLPLNVSR (345 aa). The b stretch occupies residues 346-562; it reads EILQDNHITK…EGEMSSQMIK (217 aa). A c region spans residues 563-637; it reads LMQAAGQPVP…MNQMLLANLK (75 aa).

This sequence belongs to the heat shock protein 90 family. Homodimer.

The protein resides in the cytoplasm. Molecular chaperone. Has ATPase activity. The chain is Chaperone protein HtpG from Shewanella sp. (strain MR-4).